We begin with the raw amino-acid sequence, 274 residues long: 2,3,4,5-tetrahydropyridine-2,6-dicarboxylate N-succinyltransferase (274 aa).

Belongs to the transferase hexapeptide repeat family.

The protein localises to the cytoplasm. The enzyme catalyses (S)-2,3,4,5-tetrahydrodipicolinate + succinyl-CoA + H2O = (S)-2-succinylamino-6-oxoheptanedioate + CoA. The protein operates within amino-acid biosynthesis; L-lysine biosynthesis via DAP pathway; LL-2,6-diaminopimelate from (S)-tetrahydrodipicolinate (succinylase route): step 1/3. In Shigella boydii serotype 18 (strain CDC 3083-94 / BS512), this protein is 2,3,4,5-tetrahydropyridine-2,6-dicarboxylate N-succinyltransferase.